A 222-amino-acid chain; its full sequence is Charged multivesicular body protein 3 (222 aa).

Residue glycine 2 is the site of N-myristoyl glycine attachment. The interval 2 to 113 (GLFGKTQEKP…LQKSTEVMKA (112 aa)) is intramolecular interaction with C-terminus. Residues 22-54 (KIRKEMRVVDRQIRDIQREEEKVKRSVKDAAKK) are a coiled coil. 2 important for autoinhibitory function regions span residues 59–64 (VCVVLA) and 168–169 (IL). Residues 149–222 (ESMDDQEEME…MQSRLATLRS (74 aa)) are a coiled coil. The tract at residues 151–220 (MDDQEEMEEA…EAMQSRLATL (70 aa)) is intramolecular interaction with N-terminus. The segment at 151–222 (MDDQEEMEEA…MQSRLATLRS (72 aa)) is interaction with VPS4A. Lysine 179 participates in a covalent cross-link: Glycyl lysine isopeptide (Lys-Gly) (interchain with G-Cter in ubiquitin). The tract at residues 180–222 (APSKVTDALPEPEPSGAMAASDEEEEEEEALEAMQSRLATLRS) is disordered. Interaction with STAMBP stretches follow at residues 196–222 (AMAASDEEEEEEEALEAMQSRLATLRS), 203–207 (EEEEE), and 221–222 (RS). The residue at position 200 (serine 200) is a Phosphoserine. Residues 200–210 (SDEEEEEEEAL) show a composition bias toward acidic residues. An MIT-interacting motif motif is present at residues 201–211 (DEEEEEEEALE).

It belongs to the SNF7 family. In terms of assembly, probable core component of the endosomal sorting required for transport complex III (ESCRT-III). ESCRT-III components are thought to multimerize to form a flat lattice on the perimeter membrane of the endosome. Several assembly forms of ESCRT-III may exist that interact and act sequentially. Forms a metastable monomer in solution; its core structure (without part of the putative autoinhibitory C-terminal acidic region) oligomerizes into a flat lattice via two different dimerization interfaces. In vitro, heteromerizes with CHMP2A (but not CHMP4) to form helical tubular structures that expose membrane-interacting sites on the outside whereas VPS4B can associate on the inside of the tubule. May interact with IGFBP7; the relevance of such interaction however remains unclear. Interacts with CHMP2A. Interacts with CHMP4A; the interaction requires the release of CHMP4A autoinhibition. Interacts with VPS4A. Interacts with STAMBP; the interaction appears to relieve the autoinhibition of CHMP3. Interacts with VTA1.

The protein localises to the cytoplasm. The protein resides in the cytosol. Its subcellular location is the membrane. It is found in the endosome. It localises to the late endosome membrane. Its function is as follows. Probable core component of the endosomal sorting required for transport complex III (ESCRT-III) which is involved in multivesicular bodies (MVBs) formation and sorting of endosomal cargo proteins into MVBs. MVBs contain intraluminal vesicles (ILVs) that are generated by invagination and scission from the limiting membrane of the endosome and mostly are delivered to lysosomes enabling degradation of membrane proteins, such as stimulated growth factor receptors, lysosomal enzymes and lipids. The MVB pathway appears to require the sequential function of ESCRT-O, -I,-II and -III complexes. ESCRT-III proteins mostly dissociate from the invaginating membrane before the ILV is released. The ESCRT machinery also functions in topologically equivalent membrane fission events, such as the terminal stages of cytokinesis and the budding of enveloped viruses (lentiviruses). ESCRT-III proteins are believed to mediate the necessary vesicle extrusion and/or membrane fission activities, possibly in conjunction with the AAA ATPase VPS4. Selectively binds to phosphatidylinositol 3,5-bisphosphate PtdIns(3,5)P2 and PtdIns(3,4)P2 in preference to other phosphoinositides tested. Involved in late stages of cytokinesis. Plays a role in endosomal sorting/trafficking of EGF receptor. The chain is Charged multivesicular body protein 3 (CHMP3) from Macaca fascicularis (Crab-eating macaque).